Reading from the N-terminus, the 865-residue chain is Leucine-rich repeat-containing protein 66 (865 aa).

The helical transmembrane segment at F4–P24 threads the bilayer. N42 carries an N-linked (GlcNAc...) asparagine glycan. LRR repeat units follow at residues R138–K160, P161–G182, Q185–G206, K209–A230, and N235–Q255. N248 is a glycosylation site (N-linked (GlcNAc...) asparagine). A helical transmembrane segment spans residues A366–F386. Disordered regions lie at residues R463 to H522 and D654 to V749. A compositionally biased stretch (polar residues) spans M470–G479. The span at A675–L688 shows a compositional bias: basic and acidic residues. The segment covering F702 to R713 has biased composition (polar residues). S714 and S748 each carry phosphoserine. One can recognise an LRRNT domain in the interval S728–E759. N-linked (GlcNAc...) asparagine glycosylation is present at N787. Residues F840–K865 form a disordered region. Acidic residues predominate over residues D855–K865.

Its subcellular location is the membrane. The polypeptide is Leucine-rich repeat-containing protein 66 (Lrrc66) (Rattus norvegicus (Rat)).